Here is an 876-residue protein sequence, read N- to C-terminus: Alanine--tRNA ligase (876 aa).

Residues histidine 564, histidine 568, cysteine 666, and histidine 670 each contribute to the Zn(2+) site.

This sequence belongs to the class-II aminoacyl-tRNA synthetase family. Homotetramer. Zn(2+) serves as cofactor.

It is found in the cytoplasm. The enzyme catalyses tRNA(Ala) + L-alanine + ATP = L-alanyl-tRNA(Ala) + AMP + diphosphate. Its function is as follows. Catalyzes the attachment of alanine to tRNA(Ala) in a two-step reaction: alanine is first activated by ATP to form Ala-AMP and then transferred to the acceptor end of tRNA(Ala). Also edits incorrectly charged Ser-tRNA(Ala) and Gly-tRNA(Ala) via its editing domain. This chain is Alanine--tRNA ligase, found in Salmonella paratyphi B (strain ATCC BAA-1250 / SPB7).